A 289-amino-acid chain; its full sequence is Diaminopimelate epimerase (289 aa).

Asparagine 11 and asparagine 78 together coordinate substrate. Catalysis depends on cysteine 87, which acts as the Proton donor. Substrate is bound by residues 88 to 89 (GN), asparagine 163, asparagine 199, and 217 to 218 (ER). Cysteine 226 (proton acceptor) is an active-site residue. Residue 227–228 (GT) participates in substrate binding.

The protein belongs to the diaminopimelate epimerase family. Homodimer.

Its subcellular location is the cytoplasm. The enzyme catalyses (2S,6S)-2,6-diaminopimelate = meso-2,6-diaminopimelate. It functions in the pathway amino-acid biosynthesis; L-lysine biosynthesis via DAP pathway; DL-2,6-diaminopimelate from LL-2,6-diaminopimelate: step 1/1. Its function is as follows. Catalyzes the stereoinversion of LL-2,6-diaminopimelate (L,L-DAP) to meso-diaminopimelate (meso-DAP), a precursor of L-lysine and an essential component of the bacterial peptidoglycan. The sequence is that of Diaminopimelate epimerase from Mycolicibacterium vanbaalenii (strain DSM 7251 / JCM 13017 / BCRC 16820 / KCTC 9966 / NRRL B-24157 / PYR-1) (Mycobacterium vanbaalenii).